Consider the following 350-residue polypeptide: Protein-glutamate methylesterase/protein-glutamine glutaminase (350 aa).

The Response regulatory domain occupies 5-122; that stretch reads RVLCVDDSAL…REGMLAYSEL (118 aa). A 4-aspartylphosphate modification is found at Asp-56. In terms of domain architecture, CheB-type methylesterase spans 153–345; that stretch reads LLSSEKLIAI…QRMLAQISAG (193 aa). Residues Ser-165, His-191, and Asp-287 contribute to the active site.

It belongs to the CheB family. Phosphorylated by CheA. Phosphorylation of the N-terminal regulatory domain activates the methylesterase activity.

The protein localises to the cytoplasm. The catalysed reaction is [protein]-L-glutamate 5-O-methyl ester + H2O = L-glutamyl-[protein] + methanol + H(+). It catalyses the reaction L-glutaminyl-[protein] + H2O = L-glutamyl-[protein] + NH4(+). Involved in chemotaxis. Part of a chemotaxis signal transduction system that modulates chemotaxis in response to various stimuli. Catalyzes the demethylation of specific methylglutamate residues introduced into the chemoreceptors (methyl-accepting chemotaxis proteins or MCP) by CheR. Also mediates the irreversible deamidation of specific glutamine residues to glutamic acid. Does not interact with the C-terminal pentapeptide of the chemoreceptors. In Pectobacterium atrosepticum (strain SCRI 1043 / ATCC BAA-672) (Erwinia carotovora subsp. atroseptica), this protein is Protein-glutamate methylesterase/protein-glutamine glutaminase.